Here is a 70-residue protein sequence, read N- to C-terminus: Small ribosomal subunit protein bS21 (70 aa).

The protein belongs to the bacterial ribosomal protein bS21 family.

The sequence is that of Small ribosomal subunit protein bS21 from Laribacter hongkongensis (strain HLHK9).